Consider the following 518-residue polypeptide: Sensor protein kinase HptS (518 aa).

2 helical membrane-spanning segments follow: residues Ile20–Trp40 and Gly222–Ile242. The Histidine kinase domain maps to Glu297–Arg513. At His325 the chain carries Phosphohistidine; by autocatalysis.

Post-translationally, autophosphorylated.

The protein resides in the cell membrane. It carries out the reaction ATP + protein L-histidine = ADP + protein N-phospho-L-histidine.. Member of the two-component regulatory system HptS/HptR that regulates genes involved in hexose phosphate transport system in response to changes in extracellular phosphate sources. May act as a sensor protein kinase which is autophosphorylated at a histidine residue and transfers its phosphate group to the conserved aspartic acid residue in the regulatory domain of HptS. In turn, HptS antagonizes CcpA-dependent transcription of a subset of CcpA-regulated genes involved in antibiotic susceptibility. This chain is Sensor protein kinase HptS (hptS), found in Staphylococcus aureus (strain MRSA252).